Here is a 562-residue protein sequence, read N- to C-terminus: Formate--tetrahydrofolate ligase (562 aa).

Residue 77 to 84 (TPAGEGKS) participates in ATP binding.

Belongs to the formate--tetrahydrofolate ligase family.

It carries out the reaction (6S)-5,6,7,8-tetrahydrofolate + formate + ATP = (6R)-10-formyltetrahydrofolate + ADP + phosphate. The protein operates within one-carbon metabolism; tetrahydrofolate interconversion. This is Formate--tetrahydrofolate ligase from Corynebacterium jeikeium (strain K411).